A 244-amino-acid chain; its full sequence is MKYLIDLHTHTIVSGHAYTTLLENIKQASQIGIKILGTSEHGPKMPGAPHIWYFGNMNKVPRKIYDVTVLRGCEADILNSNGDLDIPERIQNELDYIIASLHDVCIEPGTIEDNTKALLNAMNNPNIDILGHTGNPMYPIDIDAVVSKAKEKNVLIEINNGSLSGSREGSYDNCKKIAQACKKKGVKVILGTDSHISFTIGNFDKVQKLLDSVDMPKELIMNTDEKKIVEYLKAKGKLKNFNLE.

Zn(2+)-binding residues include H8, H10, H16, H41, E74, H102, H132, D193, and H195.

The protein belongs to the PHP family. The cofactor is Zn(2+).

The chain is Probable phosphatase CA_C0509 from Clostridium acetobutylicum (strain ATCC 824 / DSM 792 / JCM 1419 / IAM 19013 / LMG 5710 / NBRC 13948 / NRRL B-527 / VKM B-1787 / 2291 / W).